The sequence spans 200 residues: Imidazole glycerol phosphate synthase subunit HisH (200 aa).

The Glutamine amidotransferase type-1 domain occupies 3 to 200 (DVALIDAGGA…LHNFLEMSFP (198 aa)). Cys78 functions as the Nucleophile in the catalytic mechanism. Active-site residues include His179 and Glu181.

As to quaternary structure, heterodimer of HisH and HisF.

The protein localises to the cytoplasm. It carries out the reaction 5-[(5-phospho-1-deoxy-D-ribulos-1-ylimino)methylamino]-1-(5-phospho-beta-D-ribosyl)imidazole-4-carboxamide + L-glutamine = D-erythro-1-(imidazol-4-yl)glycerol 3-phosphate + 5-amino-1-(5-phospho-beta-D-ribosyl)imidazole-4-carboxamide + L-glutamate + H(+). It catalyses the reaction L-glutamine + H2O = L-glutamate + NH4(+). It participates in amino-acid biosynthesis; L-histidine biosynthesis; L-histidine from 5-phospho-alpha-D-ribose 1-diphosphate: step 5/9. Functionally, IGPS catalyzes the conversion of PRFAR and glutamine to IGP, AICAR and glutamate. The HisH subunit catalyzes the hydrolysis of glutamine to glutamate and ammonia as part of the synthesis of IGP and AICAR. The resulting ammonia molecule is channeled to the active site of HisF. The protein is Imidazole glycerol phosphate synthase subunit HisH of Xanthomonas oryzae pv. oryzae (strain MAFF 311018).